The following is a 487-amino-acid chain: UDP-N-acetylmuramate--L-alanine ligase (487 aa).

Residue 129 to 135 (GTHGKTT) participates in ATP binding.

Belongs to the MurCDEF family.

The protein resides in the cytoplasm. It carries out the reaction UDP-N-acetyl-alpha-D-muramate + L-alanine + ATP = UDP-N-acetyl-alpha-D-muramoyl-L-alanine + ADP + phosphate + H(+). The protein operates within cell wall biogenesis; peptidoglycan biosynthesis. Functionally, cell wall formation. This chain is UDP-N-acetylmuramate--L-alanine ligase, found in Aliivibrio fischeri (strain ATCC 700601 / ES114) (Vibrio fischeri).